The chain runs to 396 residues: S-adenosylmethionine synthase (396 aa).

H16 lines the ATP pocket. A Mg(2+)-binding site is contributed by D18. E44 is a binding site for K(+). L-methionine is bound by residues E57 and Q100. Residues 100–110 (QSPDIAQGVNE) are flexible loop. ATP contacts are provided by residues 175–177 (DAK), 242–243 (RF), D251, 257–258 (RK), A274, and K278. D251 contributes to the L-methionine binding site. Position 282 (K282) interacts with L-methionine.

This sequence belongs to the AdoMet synthase family. In terms of assembly, homotetramer; dimer of dimers. It depends on Mg(2+) as a cofactor. K(+) is required as a cofactor.

It localises to the cytoplasm. It catalyses the reaction L-methionine + ATP + H2O = S-adenosyl-L-methionine + phosphate + diphosphate. It functions in the pathway amino-acid biosynthesis; S-adenosyl-L-methionine biosynthesis; S-adenosyl-L-methionine from L-methionine: step 1/1. Catalyzes the formation of S-adenosylmethionine (AdoMet) from methionine and ATP. The overall synthetic reaction is composed of two sequential steps, AdoMet formation and the subsequent tripolyphosphate hydrolysis which occurs prior to release of AdoMet from the enzyme. This is S-adenosylmethionine synthase from Streptococcus suis (strain 05ZYH33).